The primary structure comprises 445 residues: Phosphoglucosamine mutase (445 aa).

The active-site Phosphoserine intermediate is the serine 99. Mg(2+) contacts are provided by serine 99, aspartate 242, aspartate 244, and aspartate 246. Residue serine 99 is modified to Phosphoserine.

Belongs to the phosphohexose mutase family. Mg(2+) is required as a cofactor. Activated by phosphorylation.

It catalyses the reaction alpha-D-glucosamine 1-phosphate = D-glucosamine 6-phosphate. Functionally, catalyzes the conversion of glucosamine-6-phosphate to glucosamine-1-phosphate. This Helicobacter pylori (strain G27) protein is Phosphoglucosamine mutase.